A 522-amino-acid chain; its full sequence is Target of rapamycin complex 2 subunit MAPKAP1 (522 aa).

At A2 the chain carries N-acetylalanine. Residues 2-184 form an interaction with MAP3K2 region; the sequence is AFLDNPTIIL…KKIDVYLPLH (183 aa). Residues 2-267 form an interaction with NBN region; sequence AFLDNPTIIL…GFSTLALVEK (266 aa). T86 carries the phosphothreonine modification. Phosphoserine occurs at positions 128, 186, 315, and 356. Residues 139 to 267 enclose the CRIM domain; it reads QSILSVRLEQ…GFSTLALVEK (129 aa). The tract at residues 279-353 is SIN1-type RBD; that stretch reads LFVRINAAHG…QSAWEFCLVR (75 aa). The region spanning 382-487 is the SIN1-type PH domain; it reads HYKSFKVSMI…IVLKVNYILE (106 aa). R393 provides a ligand contact to a 1,2-diacyl-sn-glycero-3-phospho-(1D-myo-inositol-3,4,5-trisphosphate). T398 is subject to Phosphothreonine. K428 and K464 together coordinate a 1,2-diacyl-sn-glycero-3-phospho-(1D-myo-inositol-3,4,5-trisphosphate). The tract at residues 468 to 522 is interaction with ATF2; the sequence is FESDAATVNEIVLKVNYILESRASTARADYFAQKQRKLNRRTSFSFQKEKKSGQQ. Phosphoserine is present on S510.

The protein belongs to the SIN1 family. In terms of assembly, component of the mechanistic target of rapamycin complex 2 (mTORC2), consisting in two heterotretramers composed of MTOR, MLST8, RICTOR and MAPKAP1/SIN1. The mTORC2 core complex associates with PRR5/PROTOR1 and/or PRR5L/PROTOR2. Contrary to mTORC1, mTORC2 does not bind to and is not sensitive to FKBP12-rapamycin. Interacts with MAP3K2. Interacts with ATF2. Interacts with MAPK8. Interacts with GTP-bound HRAS and KRAS; inhibiting their activity. Interacts with IFNAR2. Interacts with CCDC28B. As to quaternary structure, interacts with NBN. Post-translationally, phosphorylation at Ser-128 by PKC promotes relocalization to the perinuclear region, where the mTORC2 complex specifically mediates phosphorylation of SGK1. Phosphorylated at Thr-86 by AKT1 or RPS6KB1 in the presence of growth factors; the effect of this phosphorylation is however unclear. According to two studies, phosphorylation at Thr-86 by AKT1 is part of a positive feedback loop that increases mTORC2 activation. According to another study, phosphorylation at Thr-86 and Thr-398 by RPS6KB1 promotes dissociation from the mTORC2 complex, leading to inhibit mTORC2 signaling. As to expression, ubiquitously expressed, with highest levels in heart and skeletal muscle.

It is found in the cell membrane. The protein resides in the endoplasmic reticulum membrane. The protein localises to the early endosome membrane. It localises to the late endosome membrane. Its subcellular location is the lysosome membrane. It is found in the golgi apparatus membrane. The protein resides in the mitochondrion outer membrane. The protein localises to the cytoplasm. It localises to the perinuclear region. Its subcellular location is the nucleus. It is found in the cytosol. With respect to regulation, phosphatidylinositol 3,4,5-trisphosphate (PI(3,4,5)P3) promotes MTOR activation by relieving MAPKAP1/SIN1-mediated inhibition of MTOR that takes place in absence of PI(3,4,5)P3. Functionally, component of the mechanistic target of rapamycin complex 2 (mTORC2), which transduces signals from growth factors to pathways involved in proliferation, cytoskeletal organization, lipogenesis and anabolic output. In response to growth factors, mTORC2 phosphorylates and activates AGC protein kinase family members, including AKT (AKT1, AKT2 and AKT3), PKC (PRKCA, PRKCB and PRKCE) and SGK1. In contrast to mTORC1, mTORC2 is nutrient-insensitive. Within the mTORC2 complex, MAPKAP1/SIN1 acts as a substrate adapter which recognizes and binds AGC protein kinase family members for phosphorylation by MTOR. mTORC2 plays a critical role in AKT1 activation by mediating phosphorylation of different sites depending on the context, such as 'Thr-450', 'Ser-473', 'Ser-477' or 'Thr-479', facilitating the phosphorylation of the activation loop of AKT1 on 'Thr-308' by PDPK1/PDK1 which is a prerequisite for full activation. mTORC2 catalyzes the phosphorylation of SGK1 at 'Ser-422' and of PRKCA on 'Ser-657'. The mTORC2 complex also phosphorylates various proteins involved in insulin signaling, such as FBXW8 and IGF2BP1. mTORC2 acts upstream of Rho GTPases to regulate the actin cytoskeleton, probably by activating one or more Rho-type guanine nucleotide exchange factors. mTORC2 promotes the serum-induced formation of stress-fibers or F-actin. MAPKAP1 inhibits MAP3K2 by preventing its dimerization and autophosphorylation. Inhibits HRAS and KRAS independently of mTORC2 complex. Enhances osmotic stress-induced phosphorylation of ATF2 and ATF2-mediated transcription. Involved in ciliogenesis, regulates cilia length through its interaction with CCDC28B independently of mTORC2 complex. Its function is as follows. In contrast to isoform 1, isoform 2 and isoform 6, isoform 4 is not a component of the a mTORC2 complex. The chain is Target of rapamycin complex 2 subunit MAPKAP1 from Homo sapiens (Human).